Reading from the N-terminus, the 826-residue chain is Copper-transporting ATPase 1 (826 aa).

HMA domains are found at residues 15–80 and 82–147; these read APTD…YEPK and IIQE…YDVR. Cu cation-binding residues include Cys26, Cys29, Cys93, and Cys96. 6 consecutive transmembrane segments (helical) span residues 172–192, 209–229, 246–266, 270–290, 429–449, and 457–477; these read LVIL…GSHF, NLYI…LRFF, LVVL…FASG, SGTA…ILLG, AWFV…WYVF, and FALV…MGLA. The 4-aspartylphosphate intermediate role is filled by Asp514. 2 residues coordinate Mg(2+): Asp713 and Asp717. The next 2 membrane-spanning stretches (helical) occupy residues 772–792 and 795–815; these read FWAF…LYPL and TLLS…FVLG.

Belongs to the cation transport ATPase (P-type) (TC 3.A.3) family. Type IB subfamily.

It localises to the cell membrane. It carries out the reaction Cu(2+)(in) + ATP + H2O = Cu(2+)(out) + ADP + phosphate + H(+). Its function is as follows. Involved in copper transport. The chain is Copper-transporting ATPase 1 (actP1) from Rhizobium meliloti (strain 1021) (Ensifer meliloti).